The following is a 101-amino-acid chain: Small ribosomal subunit protein uS14 (101 aa).

Belongs to the universal ribosomal protein uS14 family. Part of the 30S ribosomal subunit. Contacts proteins S3 and S10.

Its function is as follows. Binds 16S rRNA, required for the assembly of 30S particles and may also be responsible for determining the conformation of the 16S rRNA at the A site. This chain is Small ribosomal subunit protein uS14, found in Saccharophagus degradans (strain 2-40 / ATCC 43961 / DSM 17024).